The sequence spans 385 residues: Putative F-box protein At1g47765 (385 aa).

Residues 1-19 (MEQQKQKKRKVVSKSKRTQ) show a composition bias toward basic residues. Residues 1–24 (MEQQKQKKRKVVSKSKRTQSKSAS) are disordered. The region spanning 20 to 69 (SKSASSLPLDLTSEILLRLPEKSIARFRCVSKLWLSITTDPYFINLFETR) is the F-box domain.

The chain is Putative F-box protein At1g47765 from Arabidopsis thaliana (Mouse-ear cress).